The primary structure comprises 365 residues: Gibberellin 20 oxidase 1-A (365 aa).

The region spanning 199-299 (GNDSIMRLNY…RKSLAFFLCP (101 aa)) is the Fe2OG dioxygenase domain. Fe cation is bound by residues His224, Asp226, and His280. The active site involves Arg290.

It belongs to the iron/ascorbate-dependent oxidoreductase family. GA20OX subfamily. Fe cation serves as cofactor. It depends on L-ascorbate as a cofactor. Expressed in nodes and the ear of the elongating stem.

It catalyses the reaction gibberellin A12 + 2 2-oxoglutarate + 3 O2 + H(+) = gibberellin A9 + 2 succinate + 3 CO2 + 2 H2O. The catalysed reaction is gibberellin A53 + 2 2-oxoglutarate + 3 O2 + H(+) = gibberellin A20 + 2 succinate + 3 CO2 + 2 H2O. Functionally, key oxidase enzyme in the biosynthesis of gibberellin that catalyzes the conversion of GA12 and GA53 to GA9 and GA20 respectively, via a three-step oxidation at C-20 of the GA skeleton. This Triticum aestivum (Wheat) protein is Gibberellin 20 oxidase 1-A (GA20ox1A).